The primary structure comprises 122 residues: Small ribosomal subunit protein uS13 (122 aa).

The span at 98-116 (VRGQKTKTNARTRKGRRKT) shows a compositional bias: basic residues. The segment at 98-122 (VRGQKTKTNARTRKGRRKTVGAATK) is disordered.

This sequence belongs to the universal ribosomal protein uS13 family. In terms of assembly, part of the 30S ribosomal subunit. Forms a loose heterodimer with protein S19. Forms two bridges to the 50S subunit in the 70S ribosome.

In terms of biological role, located at the top of the head of the 30S subunit, it contacts several helices of the 16S rRNA. In the 70S ribosome it contacts the 23S rRNA (bridge B1a) and protein L5 of the 50S subunit (bridge B1b), connecting the 2 subunits; these bridges are implicated in subunit movement. Contacts the tRNAs in the A and P-sites. The polypeptide is Small ribosomal subunit protein uS13 (Campylobacter fetus subsp. fetus (strain 82-40)).